The following is a 263-amino-acid chain: MTLLPDPAEARAARLACRQGAPRPTAGMAPGFTQCNMISLPKDWAWDFLLYAQRNPKPCPVLDVTDPGSHRTALAPKADLRTDIPLYRIWRDGVLAEETPDATAAWAEHPDLVTFLIGCSFTFETPLQQAGIEVRHIAQGCNVPMFLTDRDCRPAGRLHGKMVVSMRPIPAGRVAEAAMISGRTPAVHGAPVHIGAPEALGIADLSRPDFGDPVQIRPGEVPVFWACGVTPQAALMASKPPFAITHAPGYMFITDVPDTHWQV.

This sequence belongs to the D-glutamate cyclase family.

The polypeptide is Putative hydro-lyase Pden_0321 (Paracoccus denitrificans (strain Pd 1222)).